The sequence spans 911 residues: Eukaryotic translation initiation factor 3 subunit C (911 aa).

Disordered regions lie at residues 1–38 (MSRFFANGSDSESESSEEEVQAPNFNKASAFQFSDDEE) and 155–181 (SRFREAPDQESEAEDEEAHVSDAGEAA). The segment covering 11 to 20 (SESESSEEEV) has biased composition (acidic residues). The segment covering 23 to 32 (PNFNKASAFQ) has biased composition (polar residues). 4 positions are modified to phosphoserine: S34, S165, S175, and S184. The segment covering 162-171 (DQESEAEDEE) has biased composition (acidic residues). Residues 196 to 208 (APKIAKSAPAKSV) show a composition bias toward low complexity. The tract at residues 196–284 (APKIAKSAPA…KRAEDDEDGE (89 aa)) is disordered. The span at 210 to 236 (ADDEDSDDSIDWDSDSESETESSEDEN) shows a compositional bias: acidic residues. The segment covering 241–271 (MRERFLKRSTEKGEDKGDDDKRKDKRKEQKL) has biased composition (basic and acidic residues). A PCI domain is found at 642 to 818 (FHMHINLELL…ETVVMHRSEP (177 aa)). A disordered region spans residues 851–911 (FQRGNMGNRG…QQQVQTIDEE (61 aa)). The span at 885-896 (QRNRNQRGHHKN) shows a compositional bias: basic residues. Over residues 897–911 (QQQQQQQQVQTIDEE) the composition is skewed to low complexity.

This sequence belongs to the eIF-3 subunit C family. Component of the eukaryotic translation initiation factor 3 (eIF-3) complex. The eIF-3 complex interacts with pix.

The protein resides in the cytoplasm. In terms of biological role, component of the eukaryotic translation initiation factor 3 (eIF-3) complex, which is involved in protein synthesis of a specialized repertoire of mRNAs and, together with other initiation factors, stimulates binding of mRNA and methionyl-tRNAi to the 40S ribosome. The eIF-3 complex specifically targets and initiates translation of a subset of mRNAs involved in cell proliferation. The protein is Eukaryotic translation initiation factor 3 subunit C of Drosophila pseudoobscura pseudoobscura (Fruit fly).